Consider the following 196-residue polypeptide: Glycerol-3-phosphate acyltransferase (196 aa).

6 helical membrane-spanning segments follow: residues 5 to 25, 53 to 73, 80 to 100, 107 to 127, 130 to 150, and 153 to 173; these read VYLLIVFAYLLGSVSSAIIFC, FSALGVLLFDILKGGLPVLLA, PSEIGLIALAACLGHIFPLFF, GVATAFGALLSISFAASAAGL, WLIVFLLFGYSSLSAVITALI, and FYIWWFLPEFTFPVALVCCLL.

This sequence belongs to the PlsY family. Probably interacts with PlsX.

The protein resides in the cell inner membrane. It catalyses the reaction an acyl phosphate + sn-glycerol 3-phosphate = a 1-acyl-sn-glycero-3-phosphate + phosphate. Its pathway is lipid metabolism; phospholipid metabolism. Catalyzes the transfer of an acyl group from acyl-phosphate (acyl-PO(4)) to glycerol-3-phosphate (G3P) to form lysophosphatidic acid (LPA). This enzyme utilizes acyl-phosphate as fatty acyl donor, but not acyl-CoA or acyl-ACP. The sequence is that of Glycerol-3-phosphate acyltransferase from Actinobacillus pleuropneumoniae serotype 7 (strain AP76).